A 498-amino-acid polypeptide reads, in one-letter code: MAQVINTNSLSLITQNNINKNQSALSSSIERLSSGLRINSAKDDAAGQAIANRFTSNIKGLTQAARNANDGISVAQTTEGALSEINNNLQRVRELTVQATTGTNSESDLSSIQDEIKSRLDEIDRVSGQTQFNGVNVLAKNGSMKIQVGANDNQTITIDLKQIDAKTLGLDGFSVKNNDTVTTSAPVTAFGATTTNNIKLTGITLSTEAATDTGGTNPASIEGVYTDNGNDYYAKITGGDNDGKYYAVTVANDGTVTMATGATANATVTDANTTKATTITSGGTPVQIDNTAGSATANLGAVSLVKLQDSKGNDTDTYALKDTNGNLYAADVNETTGAVSVKTITYTDSSGAASSPTAVKLGGDDGKTEVVDIDGKTYDSADLNGGNLQTGLTAGGEALTAVANGKTTDPLKALDDAIASVDKFRSSLGAVQNRLDSAVTNLNNTTTNLSEAQSRIQDADYATEVSNMSKAQIIQQAGNSVLAKANQVPQQVLSLLQG.

Belongs to the bacterial flagellin family.

The protein localises to the secreted. It is found in the bacterial flagellum. Flagellin is the subunit protein which polymerizes to form the filaments of bacterial flagella. The sequence is that of Flagellin (fliC) from Escherichia coli (strain K12).